Reading from the N-terminus, the 276-residue chain is MTLIDNAAGLGLRRGLLPQLLAMAPGAVDFLECAPDNWIGVGGAFGADLERLVERIPLTCHGLSLSLGGSTPLDAAFIEQTRRFLVRHRVALYSEHLSYCSDDGHLYDLLPLPFTEAAVRHVAARIREAQERLERRIAVENISYYAAPYREMSEIEFVNAVLDEADCDLLLDVNNLFVNACNHGYDALDFLVRLPPGRVAAYHVAGHYDEAPDLKIDTHGAAVKPGVWALLGAAYRRFGVRPTLLERDFNYPPLGELLLEVEQIRQWQRDEGRRHG.

The protein belongs to the UPF0276 family.

This Pseudomonas aeruginosa (strain ATCC 15692 / DSM 22644 / CIP 104116 / JCM 14847 / LMG 12228 / 1C / PRS 101 / PAO1) protein is UPF0276 protein PA4106.